A 777-amino-acid chain; its full sequence is DNA ligase (777 aa).

NAD(+)-binding positions include 35–39 (DAEYD), 84–85 (SL), and glutamate 116. Lysine 118 acts as the N6-AMP-lysine intermediate in catalysis. Residues arginine 139, glutamate 176, lysine 293, and lysine 317 each coordinate NAD(+). The Zn(2+) site is built by cysteine 411, cysteine 414, cysteine 429, and cysteine 435. In terms of domain architecture, BRCT spans 691–777 (MESQPLEGQT…NQHGIDPGAL (87 aa)).

This sequence belongs to the NAD-dependent DNA ligase family. LigA subfamily. The cofactor is Mg(2+). Mn(2+) is required as a cofactor.

It catalyses the reaction NAD(+) + (deoxyribonucleotide)n-3'-hydroxyl + 5'-phospho-(deoxyribonucleotide)m = (deoxyribonucleotide)n+m + AMP + beta-nicotinamide D-nucleotide.. Its function is as follows. DNA ligase that catalyzes the formation of phosphodiester linkages between 5'-phosphoryl and 3'-hydroxyl groups in double-stranded DNA using NAD as a coenzyme and as the energy source for the reaction. It is essential for DNA replication and repair of damaged DNA. The sequence is that of DNA ligase from Alcanivorax borkumensis (strain ATCC 700651 / DSM 11573 / NCIMB 13689 / SK2).